The following is a 270-amino-acid chain: MSGQVRVAIVGAGGRMGRTLIESAYHQEHIRLGAAIERPGSSLVGVDAGELAGVGKLNIMIMDSLDYATDDFDVLIDFTAPEASIVHLDWCVRHKKAMVIGTTGFNHAQKEQINAFAEQTPVVMAPNMSVGVNLMWKLLELAAEVMGDYTDIEIIEGHHRYKKDAPSGTALKMGEVIAKTLGRDLEKCAVYGREGITGERDRETIGFATVRAGDLVGEHTAMFADIGERLEITHKASSRMTFANGAMRAAHWLVEQKPGLYDMQQVLGLN.

NAD(+) is bound by residues 11–16 and glutamate 37; that span reads GAGGRM. NADP(+) is bound at residue arginine 38. Residues 101-103 and 125-128 each bind NAD(+); these read GTT and APNM. The Proton donor/acceptor role is filled by histidine 158. Histidine 159 lines the (S)-2,3,4,5-tetrahydrodipicolinate pocket. Lysine 162 serves as the catalytic Proton donor. Residue 168–169 participates in (S)-2,3,4,5-tetrahydrodipicolinate binding; sequence GT.

This sequence belongs to the DapB family.

It localises to the cytoplasm. It catalyses the reaction (S)-2,3,4,5-tetrahydrodipicolinate + NAD(+) + H2O = (2S,4S)-4-hydroxy-2,3,4,5-tetrahydrodipicolinate + NADH + H(+). The enzyme catalyses (S)-2,3,4,5-tetrahydrodipicolinate + NADP(+) + H2O = (2S,4S)-4-hydroxy-2,3,4,5-tetrahydrodipicolinate + NADPH + H(+). It functions in the pathway amino-acid biosynthesis; L-lysine biosynthesis via DAP pathway; (S)-tetrahydrodipicolinate from L-aspartate: step 4/4. Functionally, catalyzes the conversion of 4-hydroxy-tetrahydrodipicolinate (HTPA) to tetrahydrodipicolinate. The sequence is that of 4-hydroxy-tetrahydrodipicolinate reductase from Shewanella oneidensis (strain ATCC 700550 / JCM 31522 / CIP 106686 / LMG 19005 / NCIMB 14063 / MR-1).